Here is a 152-residue protein sequence, read N- to C-terminus: UPF0178 protein YaiI (152 aa).

The protein belongs to the UPF0178 family.

In Escherichia coli O6:K15:H31 (strain 536 / UPEC), this protein is UPF0178 protein YaiI.